Consider the following 351-residue polypeptide: Protein Tex24 (351 aa).

Disordered regions lie at residues 69 to 101 (PSTAHGKRKPGHLPRLRSSAVKGHAPDPNPSLS), 117 to 144 (PEDRQTFVGPSGLPKISPKATAGEAQGK), and 275 to 298 (EKVKPSSHDMHLSTAERSFKPKSM). Over residues 73 to 83 (HGKRKPGHLPR) the composition is skewed to basic residues. Positions 275-285 (EKVKPSSHDMH) are enriched in basic and acidic residues.

Specific to testis, where it is expressed in spermatogonia.

It localises to the nucleus. In terms of biological role, nuclear factor which might have a role in spermatogenesis. The polypeptide is Protein Tex24 (Mus musculus (Mouse)).